The following is an 897-amino-acid chain: DNA mismatch repair protein MutS (897 aa).

Residue G654 to S661 coordinates ATP.

The protein belongs to the DNA mismatch repair MutS family.

Its function is as follows. This protein is involved in the repair of mismatches in DNA. It is possible that it carries out the mismatch recognition step. This protein has a weak ATPase activity. The protein is DNA mismatch repair protein MutS of Maricaulis maris (strain MCS10) (Caulobacter maris).